Here is a 398-residue protein sequence, read N- to C-terminus: Acetate kinase (398 aa).

Asn9 is a binding site for Mg(2+). Lys16 is an ATP binding site. Arg90 provides a ligand contact to substrate. The Proton donor/acceptor role is filled by Asp147. Residues 207–211 (HIGNG), 282–284 (DLR), and 330–334 (GVGEN) each bind ATP. Glu384 is a binding site for Mg(2+).

The protein belongs to the acetokinase family. As to quaternary structure, homodimer. Mg(2+) serves as cofactor. It depends on Mn(2+) as a cofactor.

The protein resides in the cytoplasm. It carries out the reaction acetate + ATP = acetyl phosphate + ADP. The protein operates within metabolic intermediate biosynthesis; acetyl-CoA biosynthesis; acetyl-CoA from acetate: step 1/2. Its function is as follows. Catalyzes the formation of acetyl phosphate from acetate and ATP. Can also catalyze the reverse reaction. This Staphylococcus carnosus (strain TM300) protein is Acetate kinase.